A 237-amino-acid chain; its full sequence is Small ribosomal subunit protein eS4 (237 aa).

In terms of domain architecture, S4 RNA-binding spans 37–100 (IPLAVLLRDV…NEYYRIIPDP (64 aa)).

The protein belongs to the eukaryotic ribosomal protein eS4 family.

In Caldivirga maquilingensis (strain ATCC 700844 / DSM 13496 / JCM 10307 / IC-167), this protein is Small ribosomal subunit protein eS4.